The primary structure comprises 357 residues: Geranylgeranyl pyrophosphate synthase 11, chloroplastic (357 aa).

Residues 1–37 (MATTLSSSSLFIQFRGRRYNSLSSFNNLQKRTVLSLS) constitute a chloroplast transit peptide. Isopentenyl diphosphate contacts are provided by Lys103, Arg106, and His135. Residues Asp142 and Asp148 each coordinate Mg(2+). Residue Arg153 participates in dimethylallyl diphosphate binding. Arg154 is a binding site for isopentenyl diphosphate. Dimethylallyl diphosphate is bound by residues Lys242, Thr243, Gln280, Lys297, and Lys307.

It belongs to the FPP/GGPP synthase family. In terms of assembly, monomer. Requires Mg(2+) as cofactor.

It is found in the plastid. The protein localises to the chloroplast. The catalysed reaction is isopentenyl diphosphate + dimethylallyl diphosphate = (2E)-geranyl diphosphate + diphosphate. The enzyme catalyses isopentenyl diphosphate + (2E)-geranyl diphosphate = (2E,6E)-farnesyl diphosphate + diphosphate. It carries out the reaction isopentenyl diphosphate + (2E,6E)-farnesyl diphosphate = (2E,6E,10E)-geranylgeranyl diphosphate + diphosphate. Its pathway is isoprenoid biosynthesis; farnesyl diphosphate biosynthesis; farnesyl diphosphate from geranyl diphosphate and isopentenyl diphosphate: step 1/1. It functions in the pathway isoprenoid biosynthesis; geranyl diphosphate biosynthesis; geranyl diphosphate from dimethylallyl diphosphate and isopentenyl diphosphate: step 1/1. It participates in isoprenoid biosynthesis; geranylgeranyl diphosphate biosynthesis; geranylgeranyl diphosphate from farnesyl diphosphate and isopentenyl diphosphate: step 1/1. Functionally, catalyzes the trans-addition of the three molecules of IPP onto DMAPP to form geranylgeranyl pyrophosphate. This chain is Geranylgeranyl pyrophosphate synthase 11, chloroplastic, found in Arabidopsis thaliana (Mouse-ear cress).